The following is a 962-amino-acid chain: Vacuolar membrane protease (962 aa).

Topologically, residues 1 to 14 (MLAQFLRSLFRFRK) are cytoplasmic. The helical transmembrane segment at 15-35 (TTVSVLLVATYVVVFLLNVWD) threads the bilayer. At 36 to 359 (RIRYQYSLPE…FVTASTKDLF (324 aa)) the chain is on the vacuolar side. N-linked (GlcNAc...) asparagine glycosylation is present at Asn-118. Zn(2+) contacts are provided by His-153 and Asp-165. The Proton acceptor role is filled by Glu-197. Zn(2+) is bound by residues Glu-198, Glu-223, and His-297. The helical transmembrane segment at 360–380 (TLNCVVLSVIPVIILVLEFVI) threads the bilayer. Residues 381–390 (QRRKTRERNP) are Cytoplasmic-facing. A helical transmembrane segment spans residues 391 to 411 (LLVWLRLPFSMFISYLVTATF). The Vacuolar portion of the chain corresponds to 412–431 (RSSLFRVNPLIFSRDYVSPT). The chain crosses the membrane as a helical span at residues 432–452 (IGFSFTFLILNYLVLSLLEYL). At 453–460 (APSRDLKT) the chain is on the cytoplasmic side. The chain crosses the membrane as a helical span at residues 461–481 (VSFVELFFGMWIALLWATIRL). The Vacuolar portion of the chain corresponds to 482–489 (CTSKYTAT). The chain crosses the membrane as a helical span at residues 490–510 (GVYPITVLYLLMSFGAIVGLV). The Cytoplasmic segment spans residues 511-601 (CSAFKRKHSV…VVSALNYDWS (91 aa)). Residues 531–554 (APNTYSSIEESPQQATNTEAPNEN) show a composition bias toward polar residues. The disordered stretch occupies residues 531 to 563 (APNTYSSIEESPQQATNTEAPNENSPEEHDERA). A helical membrane pass occupies residues 602-622 (VQFLAVVPLASFFVIMCLSLI). Over 623–639 (LDGIYQTCQEGFQATWN) the chain is Vacuolar. Residue Asn-639 is glycosylated (N-linked (GlcNAc...) asparagine). Residues 640 to 660 (VSKISMLGGMLLAIPVLPFCY) form a helical membrane-spanning segment. Position 661 (Lys-661) is a topological domain, cytoplasmic. Residues 662–682 (LNYFVSMVLLFAAASAGIFSF) traverse the membrane as a helical segment. Topologically, residues 683-962 (ERAPFTESSP…LVIVNDYIEL (280 aa)) are vacuolar. N-linked (GlcNAc...) asparagine glycans are attached at residues Asn-812 and Asn-839.

Belongs to the peptidase M28 family. Zn(2+) is required as a cofactor.

It is found in the vacuole membrane. May be involved in vacuolar sorting and osmoregulation. The polypeptide is Vacuolar membrane protease (Lachancea thermotolerans (strain ATCC 56472 / CBS 6340 / NRRL Y-8284) (Yeast)).